Consider the following 206-residue polypeptide: Large ribosomal subunit protein eL13 (206 aa).

A compositionally biased stretch (basic and acidic residues) spans 184 to 193 (EKTNQKWDGK). The segment at 184 to 206 (EKTNQKWDGKRKAKAQAAAEPKA) is disordered.

This sequence belongs to the eukaryotic ribosomal protein eL13 family.

The chain is Large ribosomal subunit protein eL13 (RPL13) from Tetrahymena thermophila (strain SB210).